The primary structure comprises 185 residues: UPF0149 protein XF_2010 (185 aa).

This sequence belongs to the UPF0149 family.

In Xylella fastidiosa (strain 9a5c), this protein is UPF0149 protein XF_2010.